The following is an 853-amino-acid chain: Mitochondrial 15S rRNA processing factor CCM1 (853 aa).

The transit peptide at Met1–Pro25 directs the protein to the mitochondrion. 2 PPR repeats span residues Asn310 to His344 and Asp347 to Lys381.

Belongs to the CCM1 family. Binds to mitochondrial small subunit 15S rRNA.

The protein resides in the mitochondrion. Regulates mitochondrial small subunit maturation by controlling 15S rRNA 5'-end processing. Localizes to the 5' precursor of the 15S rRNA in a position that is subsequently occupied by mS47 in the mature yeast mtSSU. Uses structure and sequence-specific RNA recognition, binding to a single-stranded region of the precursor and specifically recognizing bases -6 to -1. The exchange of Ccm1 for mS47 is coupled to the irreversible removal of precursor rRNA that is accompanied by conformational changes of the mitoribosomal proteins uS5m and mS26. These conformational changes signal completion of 5'-end rRNA processing through protection of the mature 5'-end of the 15S rRNA and stabilization of mS47. The removal of the 5' precursor together with the dissociation of Ccm1 may be catalyzed by the 5'-3' exoribonuclease Pet127. Involved in the specific removal of group I introns in mitochondrial encoded transcripts. In Kluyveromyces lactis (strain ATCC 8585 / CBS 2359 / DSM 70799 / NBRC 1267 / NRRL Y-1140 / WM37) (Yeast), this protein is Mitochondrial 15S rRNA processing factor CCM1 (CCM1).